We begin with the raw amino-acid sequence, 482 residues long: Exodeoxyribonuclease 7 large subunit (482 aa).

The segment at Thr457–Phe482 is disordered.

This sequence belongs to the XseA family. Heterooligomer composed of large and small subunits.

The protein resides in the cytoplasm. It catalyses the reaction Exonucleolytic cleavage in either 5'- to 3'- or 3'- to 5'-direction to yield nucleoside 5'-phosphates.. Functionally, bidirectionally degrades single-stranded DNA into large acid-insoluble oligonucleotides, which are then degraded further into small acid-soluble oligonucleotides. The protein is Exodeoxyribonuclease 7 large subunit of Ruegeria pomeroyi (strain ATCC 700808 / DSM 15171 / DSS-3) (Silicibacter pomeroyi).